Here is a 217-residue protein sequence, read N- to C-terminus: Ras-related protein RABA2a (217 aa).

19 to 26 (GDSGVGKS) contributes to the GTP binding site. An Effector region motif is present at residues 41–49 (SKSTIGVEF). GTP-binding positions include 67 to 71 (DTAGQ), 125 to 128 (NKTD), and 155 to 156 (SA). Cysteine 213 is lipidated: S-palmitoyl cysteine. Cysteine 214 bears the Cysteine methyl ester mark. Cysteine 214 is lipidated: S-geranylgeranyl cysteine. Positions 215–217 (SSS) are cleaved as a propeptide — removed in mature form.

This sequence belongs to the small GTPase superfamily. Rab family. In terms of tissue distribution, expressed in root tips.

The protein resides in the endosome membrane. It is found in the golgi apparatus. The protein localises to the trans-Golgi network membrane. In terms of biological role, intracellular vesicle trafficking and protein transport. In Arabidopsis thaliana (Mouse-ear cress), this protein is Ras-related protein RABA2a (RABA2A).